We begin with the raw amino-acid sequence, 730 residues long: Ribosomal RNA large subunit methyltransferase K/L (730 aa).

Positions Thr46–Leu157 constitute a THUMP domain.

Belongs to the methyltransferase superfamily. RlmKL family.

Its subcellular location is the cytoplasm. It catalyses the reaction guanosine(2445) in 23S rRNA + S-adenosyl-L-methionine = N(2)-methylguanosine(2445) in 23S rRNA + S-adenosyl-L-homocysteine + H(+). The catalysed reaction is guanosine(2069) in 23S rRNA + S-adenosyl-L-methionine = N(2)-methylguanosine(2069) in 23S rRNA + S-adenosyl-L-homocysteine + H(+). In terms of biological role, specifically methylates the guanine in position 2445 (m2G2445) and the guanine in position 2069 (m7G2069) of 23S rRNA. The protein is Ribosomal RNA large subunit methyltransferase K/L of Pseudomonas putida (strain W619).